The primary structure comprises 831 residues: Glucan 1,3-beta-glucosidase D (831 aa).

Positions 1–21 (MPSQSRSRDRYGRDSDRDRSR) are enriched in basic and acidic residues. Disordered regions lie at residues 1–246 (MPSQ…RGQS) and 261–288 (APDM…SDGS). Residues 1 to 300 (MPSQSRSRDR…LTPFWKRKKW (300 aa)) are Cytoplasmic-facing. Residues 32–41 (EDDDDDDDFD) show a composition bias toward acidic residues. Basic and acidic residues-rich tracts occupy residues 42-70 (DNPR…HDDY), 78-94 (EPRR…ERAR), and 151-177 (DAAR…HKST). Low complexity predominate over residues 178–195 (DSSNSSAGLLNANALAKL). Basic and acidic residues-rich tracts occupy residues 197–216 (AQHE…EAKA) and 275–286 (PPRERRWEKDSD). A helical; Signal-anchor for type II membrane protein transmembrane segment spans residues 301 to 321 (WWIGAIVLVIVVIIIVVAVVV). The Extracellular portion of the chain corresponds to 322 to 831 (SNNKKSDSDS…PSFGNLPEYY (510 aa)). The interval 325 to 360 (KKSDSDSDSDSNSGSSDSWGGDKSSLNGLDHDSIPK) is disordered. Over residues 334–350 (DSNSGSSDSWGGDKSSL) the composition is skewed to low complexity. 3 N-linked (GlcNAc...) asparagine glycosylation sites follow: asparagine 379, asparagine 396, and asparagine 547. Glutamate 598 acts as the Proton donor in catalysis. Asparagine 611, asparagine 637, asparagine 670, and asparagine 690 each carry an N-linked (GlcNAc...) asparagine glycan. The Nucleophile role is filled by glutamate 703.

This sequence belongs to the glycosyl hydrolase 5 (cellulase A) family.

It is found in the cell membrane. The catalysed reaction is Successive hydrolysis of beta-D-glucose units from the non-reducing ends of (1-&gt;3)-beta-D-glucans, releasing alpha-glucose.. In terms of biological role, glucosidase involved in the degradation of cellulosic biomass. Active on lichenan. The chain is Glucan 1,3-beta-glucosidase D (exgD) from Emericella nidulans (strain FGSC A4 / ATCC 38163 / CBS 112.46 / NRRL 194 / M139) (Aspergillus nidulans).